We begin with the raw amino-acid sequence, 97 residues long: C-C motif chemokine 7 (97 aa).

An N-terminal signal peptide occupies residues Met-1–Ala-23. A Pyrrolidone carboxylic acid modification is found at Gln-24. Asn-29 carries an N-linked (GlcNAc...) asparagine glycan. 2 cysteine pairs are disulfide-bonded: Cys-33–Cys-57 and Cys-34–Cys-73.

The protein belongs to the intercrine beta (chemokine CC) family. Monomer. Interacts with TNFAIP6 (via Link domain).

Its subcellular location is the secreted. Functionally, chemotactic factor that attracts monocytes and eosinophils, but not neutrophils. Augments monocyte anti-tumor activity. The polypeptide is C-C motif chemokine 7 (Ccl7) (Rattus norvegicus (Rat)).